A 118-amino-acid polypeptide reads, in one-letter code: Turripeptide NCR-01 (118 aa).

Positions 1–16 (MLRLILAVALVAACLA) are cleaved as a signal peptide. Positions 63 to 118 (QGFQGFLPQPHQKRDSYQHGGYQHQQSFDNFQGSGGMNNDNSDDSFALRNFNNDGY) are disordered. A compositionally biased stretch (polar residues) spans 85 to 102 (QHQQSFDNFQGSGGMNND).

Expressed by the venom duct.

The protein resides in the secreted. This chain is Turripeptide NCR-01, found in Gemmula speciosa (Splendid gem-turris).